The sequence spans 319 residues: tRNA uridine(34) hydroxylase (319 aa).

Residues 133–231 form the Rhodanese domain; the sequence is EDPDSVVIDT…YLEDVSSENS (99 aa). Catalysis depends on C191, which acts as the Cysteine persulfide intermediate.

It belongs to the TrhO family.

It carries out the reaction uridine(34) in tRNA + AH2 + O2 = 5-hydroxyuridine(34) in tRNA + A + H2O. Catalyzes oxygen-dependent 5-hydroxyuridine (ho5U) modification at position 34 in tRNAs. The chain is tRNA uridine(34) hydroxylase from Prochlorococcus marinus (strain NATL1A).